We begin with the raw amino-acid sequence, 145 residues long: Fluoride-specific ion channel FluC 2 (145 aa).

The next 4 membrane-spanning stretches (helical) occupy residues methionine 16 to alanine 36, valine 42 to leucine 62, leucine 80 to threonine 100, and isoleucine 113 to leucine 133. Glycine 88 and threonine 91 together coordinate Na(+).

It belongs to the fluoride channel Fluc/FEX (TC 1.A.43) family.

The protein resides in the cell membrane. It catalyses the reaction fluoride(in) = fluoride(out). Na(+) is not transported, but it plays an essential structural role and its presence is essential for fluoride channel function. In terms of biological role, fluoride-specific ion channel. Important for reducing fluoride concentration in the cell, thus reducing its toxicity. The chain is Fluoride-specific ion channel FluC 2 from Leifsonia xyli subsp. xyli (strain CTCB07).